A 138-amino-acid chain; its full sequence is Large ribosomal subunit protein uL16 (138 aa).

A compositionally biased stretch (basic residues) spans 1–16 (MLIPKRVKYRRQHRPT). The tract at residues 1 to 23 (MLIPKRVKYRRQHRPTRSGISKG) is disordered.

The protein belongs to the universal ribosomal protein uL16 family. In terms of assembly, part of the 50S ribosomal subunit.

In terms of biological role, binds 23S rRNA and is also seen to make contacts with the A and possibly P site tRNAs. In Corynebacterium glutamicum (strain R), this protein is Large ribosomal subunit protein uL16.